A 324-amino-acid polypeptide reads, in one-letter code: tRNA dimethylallyltransferase (324 aa).

Position 17–24 (17–24 (GPTASGKT)) interacts with ATP. 19-24 (TASGKT) is a binding site for substrate. Interaction with substrate tRNA regions lie at residues 42–45 (DSAL), 166–170 (QRIQR), 251–256 (RCVGYR), and 284–291 (KRQITWLR).

This sequence belongs to the IPP transferase family. As to quaternary structure, monomer. It depends on Mg(2+) as a cofactor.

It carries out the reaction adenosine(37) in tRNA + dimethylallyl diphosphate = N(6)-dimethylallyladenosine(37) in tRNA + diphosphate. In terms of biological role, catalyzes the transfer of a dimethylallyl group onto the adenine at position 37 in tRNAs that read codons beginning with uridine, leading to the formation of N6-(dimethylallyl)adenosine (i(6)A). The polypeptide is tRNA dimethylallyltransferase (Burkholderia vietnamiensis (strain G4 / LMG 22486) (Burkholderia cepacia (strain R1808))).